The primary structure comprises 444 residues: Tol-Pal system protein TolB (444 aa).

Residues 1-18 (MKNIIYCILLLFSFNSYA) form the signal peptide.

It belongs to the TolB family. As to quaternary structure, the Tol-Pal system is composed of five core proteins: the inner membrane proteins TolA, TolQ and TolR, the periplasmic protein TolB and the outer membrane protein Pal. They form a network linking the inner and outer membranes and the peptidoglycan layer.

It localises to the periplasm. In terms of biological role, part of the Tol-Pal system, which plays a role in outer membrane invagination during cell division and is important for maintaining outer membrane integrity. The sequence is that of Tol-Pal system protein TolB from Rickettsia bellii (strain OSU 85-389).